The primary structure comprises 338 residues: L-serine dehydratase (338 aa).

An N6-(pyridoxal phosphate)lysine modification is found at Lys39.

The protein belongs to the serine/threonine dehydratase family. Pyridoxal 5'-phosphate is required as a cofactor.

It localises to the cytoplasm. It carries out the reaction L-serine = pyruvate + NH4(+). Its pathway is carbohydrate biosynthesis; gluconeogenesis. The chain is L-serine dehydratase (SDL1) from Saccharomyces cerevisiae (strain YJM789) (Baker's yeast).